An 84-amino-acid chain; its full sequence is NADH-ubiquinone oxidoreductase chain 4L (84 aa).

A run of 2 helical transmembrane segments spans residues 18–38 (IISL…KIIY) and 51–71 (FALF…SLLV).

It belongs to the complex I subunit 4L family.

Its subcellular location is the mitochondrion membrane. It carries out the reaction a ubiquinone + NADH + 5 H(+)(in) = a ubiquinol + NAD(+) + 4 H(+)(out). Functionally, core subunit of the mitochondrial membrane respiratory chain NADH dehydrogenase (Complex I) that is believed to belong to the minimal assembly required for catalysis. Complex I functions in the transfer of electrons from NADH to the respiratory chain. The immediate electron acceptor for the enzyme is believed to be ubiquinone. This Debaryomyces hansenii (strain ATCC 36239 / CBS 767 / BCRC 21394 / JCM 1990 / NBRC 0083 / IGC 2968) (Yeast) protein is NADH-ubiquinone oxidoreductase chain 4L (ND4L).